The sequence spans 294 residues: ATP synthase gamma chain (294 aa).

The protein belongs to the ATPase gamma chain family. In terms of assembly, F-type ATPases have 2 components, CF(1) - the catalytic core - and CF(0) - the membrane proton channel. CF(1) has five subunits: alpha(3), beta(3), gamma(1), delta(1), epsilon(1). CF(0) has three main subunits: a, b and c.

It is found in the cell inner membrane. Produces ATP from ADP in the presence of a proton gradient across the membrane. The gamma chain is believed to be important in regulating ATPase activity and the flow of protons through the CF(0) complex. This chain is ATP synthase gamma chain, found in Nitrosomonas europaea (strain ATCC 19718 / CIP 103999 / KCTC 2705 / NBRC 14298).